The sequence spans 377 residues: Peptide chain release factor 2 (377 aa).

Glutamine 257 carries the post-translational modification N5-methylglutamine.

The protein belongs to the prokaryotic/mitochondrial release factor family. In terms of processing, methylated by PrmC. Methylation increases the termination efficiency of RF2.

The protein localises to the cytoplasm. Functionally, peptide chain release factor 2 directs the termination of translation in response to the peptide chain termination codons UGA and UAA. The protein is Peptide chain release factor 2 of Lactiplantibacillus plantarum (strain ATCC BAA-793 / NCIMB 8826 / WCFS1) (Lactobacillus plantarum).